We begin with the raw amino-acid sequence, 171 residues long: Envelope glycoprotein N (171 aa).

Over 1-132 (MARINSNSGT…CSALKYRIYV (132 aa)) the chain is Virion surface. The helical transmembrane segment at 133-153 (SSFVSVLNIILYVLLFLASVV) threads the bilayer. Over 154–171 (YIRYLCHQSITTETVKDY) the chain is Intravirion.

This sequence belongs to the herpesviridae glycoprotein N family. Interacts (via N-terminus) with gM (via N-terminus). The gM-gN heterodimer forms the gCII complex.

The protein resides in the virion membrane. Its subcellular location is the host membrane. It localises to the host Golgi apparatus. It is found in the host trans-Golgi network. In terms of biological role, envelope glycoprotein necessary for proper maturation of gM and modulation of its membrane fusion activity. Also plays a critical role in virion morphogenesis. The protein is Envelope glycoprotein N of Elephas maximus (Indian elephant).